We begin with the raw amino-acid sequence, 304 residues long: Phytol kinase 1, chloroplastic (304 aa).

The transit peptide at 1–59 directs the protein to the chloroplast; that stretch reads MAATLPLSPINHQLCRFGNNSLTTHRFCSPGFLISSPCFIGLTGMGSATQLRARRSLIS. Helical transmembrane passes span 71–91, 105–125, 129–149, 167–187, 191–211, and 227–247; these read VGAT…FESL, LVHI…SGST, YFAA…GLSI, ELLK…VFFW, PIGM…DIMG, and WAGS…LLYY.

The protein belongs to the polyprenol kinase family.

It is found in the plastid. Its subcellular location is the chloroplast membrane. It catalyses the reaction phytol + CTP = phytyl phosphate + CDP + H(+). Its pathway is cofactor biosynthesis; tocopherol biosynthesis. Kinase involved in the activation and reutilization of phytol from chlorophyll degradation in plant metabolism, including tocopherol biosynthesis. Catalyzes the conversion of phytol to phytol monophosphate (PMP) in the presence of CTP or UTP. No activity with ATP or GTP as phosphoryl donor. This chain is Phytol kinase 1, chloroplastic, found in Arabidopsis thaliana (Mouse-ear cress).